The primary structure comprises 246 residues: Transcription factor A, mitochondrial (246 aa).

The N-terminal 42 residues, 1–42 (MAFLRSMWGVLSALGRSGAAVCIGCGSRLRSPFSFVYLPKCF), are a transit peptide targeting the mitochondrion. The HMG box 1 DNA-binding region spans 50–118 (PKKPVSSYLR…VYKEKISRFK (69 aa)). S55, S56, and S61 each carry phosphoserine; by PKA. Phosphothreonine is present on T122. The segment at residues 155–219 (PKRPRSAYNV…RYHNEMKSWE (65 aa)) is a DNA-binding region (HMG box 2). A Phosphoserine; by PKA modification is found at S160. Phosphoserine is present on residues S193 and S195.

Monomer; binds DNA as a monomer. Homodimer. Component of the mitochondrial transcription initiation complex, composed at least of TFB2M, TFAM and POLRMT. In this complex TFAM recruits POLRMT to the promoter whereas TFB2M induces structural changes in POLRMT to enable promoter opening and trapping of the DNA non-template strand. Upon metabolic stress, forms a complex composed of FOXO3, SIRT3, TFAM and POLRMT. Interacts with TFB1M and TFB2M. Interacts with CLPX; this enhances DNA-binding. In terms of processing, phosphorylation by PKA within the HMG box 1 impairs DNA binding and promotes degradation by the AAA+ Lon protease.

It is found in the mitochondrion. It localises to the mitochondrion matrix. Its subcellular location is the mitochondrion nucleoid. Binds to the mitochondrial light strand promoter and functions in mitochondrial transcription regulation. Component of the mitochondrial transcription initiation complex, composed at least of TFB2M, TFAM and POLRMT that is required for basal transcription of mitochondrial DNA. In this complex, TFAM recruits POLRMT to a specific promoter whereas TFB2M induces structural changes in POLRMT to enable promoter opening and trapping of the DNA non-template strand. Required for accurate and efficient promoter recognition by the mitochondrial RNA polymerase. Promotes transcription initiation from the HSP1 and the light strand promoter by binding immediately upstream of transcriptional start sites. Is able to unwind DNA. Bends the mitochondrial light strand promoter DNA into a U-turn shape via its HMG boxes. Required for maintenance of normal levels of mitochondrial DNA. May play a role in organizing and compacting mitochondrial DNA. The protein is Transcription factor A, mitochondrial of Trachypithecus cristatus (Silvered leaf-monkey).